The sequence spans 194 residues: tRNA (guanosine(18)-2'-O)-methyltransferase (194 aa).

S-adenosyl-L-methionine contacts are provided by residues T99, 122–126 (GAEKW), I142, and L151.

It belongs to the class IV-like SAM-binding methyltransferase superfamily. RNA methyltransferase TrmH family. In terms of assembly, monomer.

It catalyses the reaction guanosine(18) in tRNA + S-adenosyl-L-methionine = 2'-O-methylguanosine(18) in tRNA + S-adenosyl-L-homocysteine + H(+). Stimulated by magnesium ions and spermine. Inhibited by S-adenosyl-homocysteine. Catalyzes the 2'-O methylation of guanosine at position 18 in tRNA. This Thermus thermophilus (strain ATCC BAA-163 / DSM 7039 / HB27) protein is tRNA (guanosine(18)-2'-O)-methyltransferase.